The primary structure comprises 218 residues: Small ribosomal subunit protein uS3c (218 aa).

Positions 39–109 (IRNYVKVNLS…QIRINVTELK (71 aa)) constitute a KH type-2 domain.

It belongs to the universal ribosomal protein uS3 family. As to quaternary structure, part of the 30S ribosomal subunit.

It localises to the plastid. The protein localises to the chloroplast. The protein is Small ribosomal subunit protein uS3c (rps3) of Rhodomonas salina (Cryptomonas salina).